Consider the following 864-residue polypeptide: Mitochondrial 15S rRNA processing factor CCM1 (864 aa).

Residues 1-76 (MYMARCGPKN…REFSNTLKER (76 aa)) constitute a mitochondrion transit peptide. Polar residues-rich tracts occupy residues 80–94 (TKSVNSDGHQSNSIA) and 102–112 (NVNVTKTSSVP). The interval 80–117 (TKSVNSDGHQSNSIAPISEDSRNVNVTKTSSVPNEEKS) is disordered. PPR repeat units lie at residues 319-353 (NKQNLTTVIQFYSRKEMTKQAWNTFDTMKFLSTKH) and 356-390 (DICTYNTMLRICEKERNFPKALDLFQEIQDHNIKP).

It belongs to the CCM1 family. As to quaternary structure, binds to mitochondrial small subunit 15S rRNA.

It localises to the mitochondrion. Its function is as follows. Regulates mitochondrial small subunit maturation by controlling 15S rRNA 5'-end processing. Localizes to the 5' precursor of the 15S rRNA in a position that is subsequently occupied by mS47 in the mature yeast mtSSU. Uses structure and sequence-specific RNA recognition, binding to a single-stranded region of the precursor and specifically recognizing bases -6 to -1. The exchange of Ccm1 for mS47 is coupled to the irreversible removal of precursor rRNA that is accompanied by conformational changes of the mitoribosomal proteins uS5m and mS26. These conformational changes signal completion of 5'-end rRNA processing through protection of the mature 5'-end of the 15S rRNA and stabilization of mS47. The removal of the 5' precursor together with the dissociation of Ccm1 may be catalyzed by the 5'-3' exoribonuclease Pet127. Involved in the specific removal of group I introns in mitochondrial encoded transcripts. The protein is Mitochondrial 15S rRNA processing factor CCM1 of Saccharomyces cerevisiae (strain ATCC 204508 / S288c) (Baker's yeast).